Reading from the N-terminus, the 248-residue chain is uncharacterized protein (248 aa).

Residue 8-32 (IVTGAAQGIGQAYAQALAREGASVV) coordinates NADP(+). S143 is a binding site for substrate. Catalysis depends on Y153, which acts as the Proton acceptor.

The protein belongs to the short-chain dehydrogenases/reductases (SDR) family.

This is an uncharacterized protein from Mycobacterium tuberculosis (strain CDC 1551 / Oshkosh).